A 102-amino-acid polypeptide reads, in one-letter code: PqqA binding protein (102 aa).

This sequence belongs to the PqqD family. Monomer. Interacts with PqqE.

It functions in the pathway cofactor biosynthesis; pyrroloquinoline quinone biosynthesis. Functionally, functions as a PqqA binding protein and presents PqqA to PqqE, in the pyrroloquinoline quinone (PQQ) biosynthetic pathway. This is PqqA binding protein from Rhodopseudomonas palustris (strain BisB5).